The following is a 204-amino-acid chain: uncharacterized protein (204 aa).

This is an uncharacterized protein from Rickettsia prowazekii (strain Madrid E).